Consider the following 680-residue polypeptide: E3 ubiquitin-protein ligase Midline-1 (680 aa).

The RING-type zinc-finger motif lies at 10 to 60; the sequence is CPICLELFEDPLLLPCAHSLCFNCAHRILVSHCATNEPVESINAFQCPTCR. 2 positions are modified to phosphoserine: Ser92 and Ser96. 2 B box-type zinc fingers span residues 116-165 and 172-212; these read KVLC…IEPI and GLMC…VAAL. Zn(2+)-binding residues include Cys119, Cys122, Cys134, Cys137, Cys142, Cys145, His150, His159, Cys175, His178, Cys198, and His204. Residues 205 to 264 adopt a coiled-coil conformation; sequence RDHQVAALSERYDKLKQNLESNLTNLIKRNTELETLLAKLIQTCQHVEVNASRQEAKLTE. The COS domain maps to 320–379; it reads LKENDHARFLQTAKNITERVSMATASSQVLIPEINLNDTFDTFALDFSREKKLLECLDYL. The Fibronectin type-III domain maps to 384 to 494; sequence PPAIREELCT…RSSEPGKLKT (111 aa). Over residues 484–498 the composition is skewed to polar residues; that stretch reads SRSSEPGKLKTNSQP. Disordered regions lie at residues 484–503 and 516–535; these read SRSS…RLDP and NLTV…PERF. Residues 495-672 form the B30.2/SPRY domain; that stretch reads NSQPFRLDPK…IVTGLPIPDH (178 aa). Basic and acidic residues predominate over residues 516-533; that stretch reads NLTVERDESSSKKSHAPE. Ser524 bears the Phosphoserine mark.

Belongs to the TRIM/RBCC family. As to quaternary structure, homodimer or heterodimer with MID2. Interacts with IGBP1. In terms of processing, phosphorylated. As to expression, ubiquitously expressed in fetus and adult. At 9 dpc-10.5 dpc, highest expression found in frontonasal processes, branchial arches and CNS. From 12.5 dpc to 16.5 dpc, high levels found in rostral part of CNS. At 14.5 dpc, begins to be highly expressed in kidney and lung. At 16.5 dpc, highly expressed in the mucosa of the hindgut and cutaneous region of the stomach.

It is found in the cytoplasm. The protein localises to the cytoskeleton. It catalyses the reaction S-ubiquitinyl-[E2 ubiquitin-conjugating enzyme]-L-cysteine + [acceptor protein]-L-lysine = [E2 ubiquitin-conjugating enzyme]-L-cysteine + N(6)-ubiquitinyl-[acceptor protein]-L-lysine.. In terms of biological role, has E3 ubiquitin ligase activity towards IGBP1, promoting its monoubiquitination, which results in deprotection of the catalytic subunit of protein phosphatase PP2A, and its subsequent degradation by polyubiquitination. The chain is E3 ubiquitin-protein ligase Midline-1 (Mid1) from Mus musculus (Mouse).